The primary structure comprises 117 residues: Large ribosomal subunit protein bL19 (117 aa).

It belongs to the bacterial ribosomal protein bL19 family.

This protein is located at the 30S-50S ribosomal subunit interface and may play a role in the structure and function of the aminoacyl-tRNA binding site. The chain is Large ribosomal subunit protein bL19 from Shewanella sediminis (strain HAW-EB3).